The primary structure comprises 61 residues: Potassium channel toxin alpha-KTx 6.6 (61 aa).

An N-terminal signal peptide occupies residues 1 to 23; sequence MNAKFILLLLVVATTMLLPDTQG. Disulfide bonds link cysteine 29–cysteine 50, cysteine 35–cysteine 55, cysteine 39–cysteine 57, and cysteine 45–cysteine 60. Cysteine 60 is subject to Cysteine amide.

It belongs to the short scorpion toxin superfamily. Potassium channel inhibitor family. Alpha-KTx 06 subfamily. Expressed by the venom gland.

The protein localises to the secreted. Functionally, blocker of voltage-gated potassium channels. This chain is Potassium channel toxin alpha-KTx 6.6, found in Opistophthalmus carinatus (African yellow leg scorpion).